The chain runs to 106 residues: MTLYYIGILLVIIGLFAIFSGIIGFFRFPDFYTKLHAASVIESFGVPICLIGFACIAADIVNSVKLILAALLIFILNPVATHALGKASLFMKIRADSTVIARKITK.

Belongs to the UPF0091 family.

This Rickettsia conorii (strain ATCC VR-613 / Malish 7) protein is UPF0091 protein RC0354.